The following is a 287-amino-acid chain: 2-dehydro-3-deoxyphosphooctonate aldolase (287 aa).

The protein belongs to the KdsA family.

It is found in the cytoplasm. It carries out the reaction D-arabinose 5-phosphate + phosphoenolpyruvate + H2O = 3-deoxy-alpha-D-manno-2-octulosonate-8-phosphate + phosphate. The protein operates within carbohydrate biosynthesis; 3-deoxy-D-manno-octulosonate biosynthesis; 3-deoxy-D-manno-octulosonate from D-ribulose 5-phosphate: step 2/3. It participates in bacterial outer membrane biogenesis; lipopolysaccharide biosynthesis. The sequence is that of 2-dehydro-3-deoxyphosphooctonate aldolase from Bradyrhizobium sp. (strain ORS 278).